The sequence spans 59 residues: UPF0434 protein VC_1876 (59 aa).

The protein belongs to the UPF0434 family.

The sequence is that of UPF0434 protein VC_1876 from Vibrio cholerae serotype O1 (strain ATCC 39315 / El Tor Inaba N16961).